The chain runs to 208 residues: Small ribosomal subunit protein uS4 (208 aa).

The S4 RNA-binding domain occupies 98–159 (RRLDNVVYRL…KSRKIVSIND (62 aa)).

It belongs to the universal ribosomal protein uS4 family. As to quaternary structure, part of the 30S ribosomal subunit. Contacts protein S5. The interaction surface between S4 and S5 is involved in control of translational fidelity.

One of the primary rRNA binding proteins, it binds directly to 16S rRNA where it nucleates assembly of the body of the 30S subunit. Functionally, with S5 and S12 plays an important role in translational accuracy. In Pelobacter propionicus (strain DSM 2379 / NBRC 103807 / OttBd1), this protein is Small ribosomal subunit protein uS4.